Here is a 424-residue protein sequence, read N- to C-terminus: Methylenetetrahydrofolate--tRNA-(uracil-5-)-methyltransferase TrmFO 1 (424 aa).

8–13 (GAGLSG) is an FAD binding site.

This sequence belongs to the MnmG family. TrmFO subfamily. FAD serves as cofactor.

It localises to the cytoplasm. The catalysed reaction is uridine(54) in tRNA + (6R)-5,10-methylene-5,6,7,8-tetrahydrofolate + NADH + H(+) = 5-methyluridine(54) in tRNA + (6S)-5,6,7,8-tetrahydrofolate + NAD(+). It carries out the reaction uridine(54) in tRNA + (6R)-5,10-methylene-5,6,7,8-tetrahydrofolate + NADPH + H(+) = 5-methyluridine(54) in tRNA + (6S)-5,6,7,8-tetrahydrofolate + NADP(+). Its function is as follows. Catalyzes the folate-dependent formation of 5-methyl-uridine at position 54 (M-5-U54) in all tRNAs. In Mycoplasma mycoides subsp. mycoides SC (strain CCUG 32753 / NCTC 10114 / PG1), this protein is Methylenetetrahydrofolate--tRNA-(uracil-5-)-methyltransferase TrmFO 1.